Here is a 714-residue protein sequence, read N- to C-terminus: Polyribonucleotide nucleotidyltransferase (714 aa).

2 residues coordinate Mg(2+): aspartate 487 and aspartate 493. Residues proline 554 to isoleucine 613 form the KH domain. Residues glycine 623–arginine 691 form the S1 motif domain.

Belongs to the polyribonucleotide nucleotidyltransferase family. Requires Mg(2+) as cofactor.

The protein localises to the cytoplasm. It carries out the reaction RNA(n+1) + phosphate = RNA(n) + a ribonucleoside 5'-diphosphate. Its function is as follows. Involved in mRNA degradation. Catalyzes the phosphorolysis of single-stranded polyribonucleotides processively in the 3'- to 5'-direction. This Methylocella silvestris (strain DSM 15510 / CIP 108128 / LMG 27833 / NCIMB 13906 / BL2) protein is Polyribonucleotide nucleotidyltransferase.